The following is a 100-amino-acid chain: Large ribosomal subunit protein bL28 (100 aa).

The segment at 1 to 25 (MTRRCDITGKSVLSGNNVSHANNKS) is disordered. Positions 11 to 22 (SVLSGNNVSHAN) are enriched in polar residues.

The protein belongs to the bacterial ribosomal protein bL28 family.

The sequence is that of Large ribosomal subunit protein bL28 from Acidiphilium cryptum (strain JF-5).